Reading from the N-terminus, the 98-residue chain is Prolactin-releasing peptide (98 aa).

The N-terminal stretch at 1–22 (MKAVGAWLLCLLLLGLALQGAA) is a signal peptide. 2 disordered regions span residues 52-71 (RFGR…PRRV) and 79-98 (GGAE…LVQE). Residue Phe53 is modified to Phenylalanine amide. Positions 58 to 98 (AAPGDGPRPGPRRVPACFRLEGGAEPSRALPGRLTAQLVQE) are excised as a propeptide.

Amidation of C-terminus is required for receptor interaction. In terms of tissue distribution, medulla oblongata and hypothalamus.

The protein localises to the secreted. Stimulates prolactin (PRL) release and regulates the expression of prolactin through its receptor GPR10. May stimulate lactotrophs directly to secrete PRL. The polypeptide is Prolactin-releasing peptide (PRLH) (Bos taurus (Bovine)).